We begin with the raw amino-acid sequence, 350 residues long: Palmitoyltransferase erf2 (350 aa).

Over M1–A86 the chain is Cytoplasmic. The chain crosses the membrane as a helical span at residues F87–F107. Residues W108 to H112 are Lumenal-facing. The helical transmembrane segment at V113–F133 threads the bilayer. At K134–R225 the chain is on the cytoplasmic side. The DHHC domain occupies V182 to L232. The active-site S-palmitoyl cysteine intermediate is C212. Residues Y226–F246 traverse the membrane as a helical segment. Residues Y247–A270 lie on the Lumenal side of the membrane. Residues G271 to F291 traverse the membrane as a helical segment. Residues C292–V350 lie on the Cytoplasmic side of the membrane.

The protein belongs to the DHHC palmitoyltransferase family. ERF2/ZDHHC9 subfamily. As to quaternary structure, interacts with erf4. In terms of processing, autopalmitoylated.

The protein resides in the endoplasmic reticulum membrane. It is found in the golgi apparatus. The protein localises to the golgi stack membrane. It carries out the reaction L-cysteinyl-[protein] + hexadecanoyl-CoA = S-hexadecanoyl-L-cysteinyl-[protein] + CoA. In terms of biological role, the erf2-erf4 complex is a palmitoyltransferase with a major role in driving sexual development. Palmitoylates ras1. Palmitoylates isp3. Palmitoylates rho3. This Schizosaccharomyces pombe (strain 972 / ATCC 24843) (Fission yeast) protein is Palmitoyltransferase erf2.